The following is a 435-amino-acid chain: Methylenetetrahydrofolate--tRNA-(uracil-5-)-methyltransferase TrmFO (435 aa).

9–14 (GAGLAG) contributes to the FAD binding site.

This sequence belongs to the MnmG family. TrmFO subfamily. FAD is required as a cofactor.

The protein resides in the cytoplasm. The catalysed reaction is uridine(54) in tRNA + (6R)-5,10-methylene-5,6,7,8-tetrahydrofolate + NADH + H(+) = 5-methyluridine(54) in tRNA + (6S)-5,6,7,8-tetrahydrofolate + NAD(+). It carries out the reaction uridine(54) in tRNA + (6R)-5,10-methylene-5,6,7,8-tetrahydrofolate + NADPH + H(+) = 5-methyluridine(54) in tRNA + (6S)-5,6,7,8-tetrahydrofolate + NADP(+). Functionally, catalyzes the folate-dependent formation of 5-methyl-uridine at position 54 (M-5-U54) in all tRNAs. This chain is Methylenetetrahydrofolate--tRNA-(uracil-5-)-methyltransferase TrmFO, found in Staphylococcus aureus (strain Newman).